Here is a 212-residue protein sequence, read N- to C-terminus: Tetraspanin-31-B (212 aa).

The Cytoplasmic portion of the chain corresponds to 1 to 12; that stretch reads MVCGGFTCSKNA. The chain crosses the membrane as a helical span at residues 13 to 33; the sequence is LCALNVVYMLVGVLLIIVAAW. Over 34-44 the chain is Extracellular; sequence GKGFGIVSSIH. A helical membrane pass occupies residues 45–65; it reads IIGGVIAIGVFLLLIAIIGLI. Topologically, residues 66–72 are cytoplasmic; that stretch reads GAVSHHQ. A helical transmembrane segment spans residues 73 to 93; sequence VMLFIYMVVLILVFIFQFIVS. The Extracellular portion of the chain corresponds to 94-175; it reads CSCLAMNRSQ…MLNHADEALK (82 aa). Asn100, Asn109, Asn117, and Asn134 each carry an N-linked (GlcNAc...) asparagine glycan. A helical transmembrane segment spans residues 176–196; sequence ILGGVGLFFSFTEILGVWLAF. Topologically, residues 197–212 are cytoplasmic; sequence RYRNQKDPRANPSAFL.

Belongs to the tetraspanin (TM4SF) family.

It localises to the membrane. This chain is Tetraspanin-31-B (tspan31-b), found in Xenopus laevis (African clawed frog).